Here is a 422-residue protein sequence, read N- to C-terminus: Serine--tRNA ligase (422 aa).

Position 231-233 (231-233) interacts with L-serine; that stretch reads TSE. 262 to 264 serves as a coordination point for ATP; sequence RQE. E285 contributes to the L-serine binding site. Residue 349–352 coordinates ATP; that stretch reads EISS. L-serine is bound at residue S384.

Belongs to the class-II aminoacyl-tRNA synthetase family. Type-1 seryl-tRNA synthetase subfamily. As to quaternary structure, homodimer. The tRNA molecule binds across the dimer.

It localises to the cytoplasm. The enzyme catalyses tRNA(Ser) + L-serine + ATP = L-seryl-tRNA(Ser) + AMP + diphosphate + H(+). The catalysed reaction is tRNA(Sec) + L-serine + ATP = L-seryl-tRNA(Sec) + AMP + diphosphate + H(+). Its pathway is aminoacyl-tRNA biosynthesis; selenocysteinyl-tRNA(Sec) biosynthesis; L-seryl-tRNA(Sec) from L-serine and tRNA(Sec): step 1/1. Catalyzes the attachment of serine to tRNA(Ser). Is also able to aminoacylate tRNA(Sec) with serine, to form the misacylated tRNA L-seryl-tRNA(Sec), which will be further converted into selenocysteinyl-tRNA(Sec). The polypeptide is Serine--tRNA ligase (Mycoplasma capricolum subsp. capricolum (strain California kid / ATCC 27343 / NCTC 10154)).